A 395-amino-acid chain; its full sequence is Selection and upkeep of intraepithelial T-cells protein 7 (395 aa).

Residues 1-25 (MMKPEFFCFSGFCVYFLFLQVVVSS) form the signal peptide. Positions 26–141 (EKLRVTTPTR…DAAIMNLNVT (116 aa)) constitute an Ig-like V-type domain. Residues 26-248 (EKLRVTTPTR…FNRDRIWMES (223 aa)) lie on the Extracellular side of the membrane. A disulfide bond links Cys-49 and Cys-123. N-linked (GlcNAc...) asparagine glycosylation is found at Asn-92 and Asn-139. Residues 142–233 (AVGLETEIHV…TGEEKQTSII (92 aa)) form the Ig-like C1-type domain. A disulfide bridge links Cys-163 with Cys-217. Residues 249–269 (LASIVWIMLSVYILYIICFYW) traverse the membrane as a helical segment. Over 270–287 (RTGCASGCLSKCFCVVTS) the chain is Cytoplasmic. A helical transmembrane segment spans residues 288–308 (WPVQIVHLLFCTGTFFAIYLP). The Extracellular segment spans residues 309-329 (HRSRVSLSDPQFPLYNNWITE). Residues 330 to 350 (LLFVILFLTICFALPIILLFI) traverse the membrane as a helical segment. Residues 351-395 (QFQFTSLTKWEKNKDGIMDQPRLGKAHETSSLYRKKTGKSWEQEK) lie on the Cytoplasmic side of the membrane. Residues 371-395 (PRLGKAHETSSLYRKKTGKSWEQEK) form a disordered region.

Belongs to the SKINT family. As to expression, expressed in skin, thymus, testis and, to a lower extent, bladder.

The protein resides in the membrane. May act by engaging a cell surface molecule on immature T-cells in the embryonic thymus. This is Selection and upkeep of intraepithelial T-cells protein 7 (Skint7) from Mus musculus (Mouse).